The chain runs to 233 residues: 5'-methylthioadenosine/S-adenosylhomocysteine nucleosidase (233 aa).

Residue E12 is the Proton acceptor of the active site. Substrate-binding positions include G78, I156, and 177-178 (ME). Residue D201 is the Proton donor of the active site.

Belongs to the PNP/UDP phosphorylase family. MtnN subfamily.

It carries out the reaction S-adenosyl-L-homocysteine + H2O = S-(5-deoxy-D-ribos-5-yl)-L-homocysteine + adenine. It catalyses the reaction S-methyl-5'-thioadenosine + H2O = 5-(methylsulfanyl)-D-ribose + adenine. The catalysed reaction is 5'-deoxyadenosine + H2O = 5-deoxy-D-ribose + adenine. It participates in amino-acid biosynthesis; L-methionine biosynthesis via salvage pathway; S-methyl-5-thio-alpha-D-ribose 1-phosphate from S-methyl-5'-thioadenosine (hydrolase route): step 1/2. Functionally, catalyzes the irreversible cleavage of the glycosidic bond in both 5'-methylthioadenosine (MTA) and S-adenosylhomocysteine (SAH/AdoHcy) to adenine and the corresponding thioribose, 5'-methylthioribose and S-ribosylhomocysteine, respectively. Also cleaves 5'-deoxyadenosine, a toxic by-product of radical S-adenosylmethionine (SAM) enzymes, into 5-deoxyribose and adenine. The sequence is that of 5'-methylthioadenosine/S-adenosylhomocysteine nucleosidase from Listeria innocua serovar 6a (strain ATCC BAA-680 / CLIP 11262).